Here is a 356-residue protein sequence, read N- to C-terminus: Phospho-N-acetylmuramoyl-pentapeptide-transferase (356 aa).

The next 10 membrane-spanning stretches (helical) occupy residues 3 to 23, 51 to 71, 80 to 100, 114 to 134, 152 to 172, 185 to 205, 227 to 247, 254 to 274, 279 to 299, and 333 to 353; these read QILFAGAIGLFLTLVGTPLLI, TMGGIAFILATIVAYLLAKVI, GLLVLFLMAGMGLVGFLDDYI, AKMAGQLIVGIAFAVLSLQFP, FGWSIGPVLFCVWALFMILAM, LATGASVMVFGAYTFIGLWQF, PLDLAVVAAALMGACFGFLWW, IFMGDTGSLALGGALAGLAIL, FLLAILGGLFVMITMSVVIQV, and FWIIQGMCVIVGLGLFYAGWA.

It belongs to the glycosyltransferase 4 family. MraY subfamily. Requires Mg(2+) as cofactor.

It localises to the cell membrane. The enzyme catalyses UDP-N-acetyl-alpha-D-muramoyl-L-alanyl-gamma-D-glutamyl-meso-2,6-diaminopimeloyl-D-alanyl-D-alanine + di-trans,octa-cis-undecaprenyl phosphate = di-trans,octa-cis-undecaprenyl diphospho-N-acetyl-alpha-D-muramoyl-L-alanyl-D-glutamyl-meso-2,6-diaminopimeloyl-D-alanyl-D-alanine + UMP. Its pathway is cell wall biogenesis; peptidoglycan biosynthesis. Its function is as follows. Catalyzes the initial step of the lipid cycle reactions in the biosynthesis of the cell wall peptidoglycan: transfers peptidoglycan precursor phospho-MurNAc-pentapeptide from UDP-MurNAc-pentapeptide onto the lipid carrier undecaprenyl phosphate, yielding undecaprenyl-pyrophosphoryl-MurNAc-pentapeptide, known as lipid I. This Streptomyces griseus subsp. griseus (strain JCM 4626 / CBS 651.72 / NBRC 13350 / KCC S-0626 / ISP 5235) protein is Phospho-N-acetylmuramoyl-pentapeptide-transferase.